A 450-amino-acid chain; its full sequence is 23S rRNA (uracil(1939)-C(5))-methyltransferase RlmD (450 aa).

Positions 1-62 (MPVAGPLDIV…PSYEQAGVVN (62 aa)) constitute a TRAM domain. [4Fe-4S] cluster contacts are provided by Cys-75, Cys-81, Cys-84, and Cys-163. Positions 271, 300, 305, 321, 349, and 370 each coordinate S-adenosyl-L-methionine. Cys-406 serves as the catalytic Nucleophile.

The protein belongs to the class I-like SAM-binding methyltransferase superfamily. RNA M5U methyltransferase family. RlmD subfamily.

It catalyses the reaction uridine(1939) in 23S rRNA + S-adenosyl-L-methionine = 5-methyluridine(1939) in 23S rRNA + S-adenosyl-L-homocysteine + H(+). Functionally, catalyzes the formation of 5-methyl-uridine at position 1939 (m5U1939) in 23S rRNA. The protein is 23S rRNA (uracil(1939)-C(5))-methyltransferase RlmD of Ralstonia pickettii (strain 12J).